The sequence spans 529 residues: Peptide chain release factor 3 (529 aa).

Positions 11–280 constitute a tr-type G domain; that stretch reads AARRTFAIIS…GLVAWAPPPM (270 aa). GTP is bound by residues 20-27, 88-92, and 142-145; these read SHPDAGKT, DTPGH, and NKVD.

The protein belongs to the TRAFAC class translation factor GTPase superfamily. Classic translation factor GTPase family. PrfC subfamily.

The protein localises to the cytoplasm. Functionally, increases the formation of ribosomal termination complexes and stimulates activities of RF-1 and RF-2. It binds guanine nucleotides and has strong preference for UGA stop codons. It may interact directly with the ribosome. The stimulation of RF-1 and RF-2 is significantly reduced by GTP and GDP, but not by GMP. The sequence is that of Peptide chain release factor 3 from Sodalis glossinidius (strain morsitans).